A 107-amino-acid chain; its full sequence is Iron-sulfur cluster assembly protein CyaY (107 aa).

The protein belongs to the frataxin family.

Involved in iron-sulfur (Fe-S) cluster assembly. May act as a regulator of Fe-S biogenesis. This chain is Iron-sulfur cluster assembly protein CyaY, found in Thioalkalivibrio sulfidiphilus (strain HL-EbGR7).